We begin with the raw amino-acid sequence, 166 residues long: Small ribosomal subunit protein uS5 (166 aa).

An S5 DRBM domain is found at 12-75 (YIEKLVQVNR…EAARRNMIQV (64 aa)).

Belongs to the universal ribosomal protein uS5 family. As to quaternary structure, part of the 30S ribosomal subunit. Contacts proteins S4 and S8.

Its function is as follows. With S4 and S12 plays an important role in translational accuracy. Functionally, located at the back of the 30S subunit body where it stabilizes the conformation of the head with respect to the body. This chain is Small ribosomal subunit protein uS5, found in Pseudomonas syringae pv. tomato (strain ATCC BAA-871 / DC3000).